Here is a 282-residue protein sequence, read N- to C-terminus: uncharacterized protein (282 aa).

The stretch at 205–277 forms a coiled coil; it reads LAQQRRVYAQ…DELQNKARDA (73 aa).

This is an uncharacterized protein from Treponema pallidum (strain Nichols).